Here is a 318-residue protein sequence, read N- to C-terminus: Vomeronasal type-1 receptor 45 (318 aa).

At Met1–Thr32 the chain is on the extracellular side. Residues Phe33–Leu53 traverse the membrane as a helical segment. The Cytoplasmic segment spans residues Lys54 to Asp65. Residues Leu66–Ala86 form a helical membrane-spanning segment. The Extracellular portion of the chain corresponds to Thr87–Arg109. Cys101 and Cys188 are disulfide-bonded. Residues Val110–Leu130 traverse the membrane as a helical segment. At Ser131–Cys150 the chain is on the cytoplasmic side. Residues Ala151–Ile171 form a helical membrane-spanning segment. The Extracellular segment spans residues Ala172–Ala206. N-linked (GlcNAc...) asparagine glycosylation occurs at Asn175. Residues Leu207–Leu227 form a helical membrane-spanning segment. The Cytoplasmic segment spans residues Cys228 to Gln254. The chain crosses the membrane as a helical span at residues Thr255–Cys275. Residues Ser276–Thr285 lie on the Extracellular side of the membrane. A helical transmembrane segment spans residues Ser286–Met306. The Cytoplasmic segment spans residues Ser307–Gly318.

The protein belongs to the G-protein coupled receptor 1 family. Expressed in a subset of sensory neurons located in the apical layer of the vomeronasal organ.

It localises to the cell membrane. Putative pheromone receptor implicated in the regulation of social and reproductive behavior. This Mus musculus (Mouse) protein is Vomeronasal type-1 receptor 45 (Vmn1r45).